A 1035-amino-acid chain; its full sequence is FACT complex subunit SPT16 (1035 aa).

Residues 208–234 adopt a coiled-coil conformation; the sequence is EELKITNAKLSDKIENKIDDVKFLKQL. Residues 448–496 are disordered; sequence NNEEEDNNKKKSSPATKVPSKPDRNSKILRTKLRGEARGGAEDAQKEQI. The span at 480-496 shows a compositional bias: basic and acidic residues; sequence LRGEARGGAEDAQKEQI. Residue S526 is modified to Phosphoserine. Residues 636-666 adopt a coiled-coil conformation; the sequence is MSETFKQIADLKKEATKREQERKALADVVQQ. S765 is subject to Phosphoserine. 2 disordered regions span residues 768-796 and 956-1035; these read SVDE…QEQE and GSDD…NFRD. Residues 957-1019 are compositionally biased toward acidic residues; that stretch reads SDDEASDESE…ESEEGEDWDE (63 aa). Positions 959–983 form a coiled coil; it reads DEASDESEEEVSEYEASEDDVSDES. A compositionally biased stretch (basic and acidic residues) spans 1020–1035; that stretch reads LEKKAARADRGANFRD.

This sequence belongs to the peptidase M24 family. SPT16 subfamily. Forms a stable heterodimer with POB3. The SPT16-POB3 dimer weakly associates with multiple molecules of NHP6 (NHP6A or NHP6B) to form the FACT (yFACT or SNP) complex. The FACT complex interacts with the CK2 (casein kinase II) complex subunits CKA1, CKA2, CKB1 and CKB2 and the components of the transcription machinery CHD1, CTR9, PAF1 and CDC73. The FACT complex interacts with the PAF1 complex. Interacts with POL1. Interacts with SAS3. Interacts with YTA7.

The protein resides in the nucleus. The protein localises to the chromosome. In terms of biological role, component of the FACT complex, a general chromatin factor that acts to reorganize nucleosomes. The FACT complex is involved in multiple processes that require DNA as a template such as mRNA elongation, DNA replication and DNA repair. During transcription elongation the FACT complex acts as a histone chaperone that both destabilizes and restores nucleosomal structure. It facilitates the passage of RNA polymerase II and transcription by promoting the dissociation of one histone H2A-H2B dimer from the nucleosome, then subsequently promotes the reestablishment of the nucleosome following the passage of RNA polymerase II. Transcription elongation is promoted by the repression of transcription initiation from cryptic sites. Also acts in establishing transcription initiation complexes and promotes SPT15/TBP-binding to a TATA box. Together with replication factor-A protein (RPA), FACT may play a role in nucleosome deposition during DNA replication. In Saccharomyces cerevisiae (strain ATCC 204508 / S288c) (Baker's yeast), this protein is FACT complex subunit SPT16 (SPT16).